A 364-amino-acid chain; its full sequence is DNA polymerase IV (364 aa).

One can recognise a UmuC domain in the interval Ile14–Gly198. Mg(2+)-binding residues include Asp18 and Asp116. Residue Glu117 is part of the active site.

The protein belongs to the DNA polymerase type-Y family. In terms of assembly, monomer. Mg(2+) serves as cofactor.

It localises to the cytoplasm. The catalysed reaction is DNA(n) + a 2'-deoxyribonucleoside 5'-triphosphate = DNA(n+1) + diphosphate. Functionally, poorly processive, error-prone DNA polymerase involved in untargeted mutagenesis. Copies undamaged DNA at stalled replication forks, which arise in vivo from mismatched or misaligned primer ends. These misaligned primers can be extended by PolIV. Exhibits no 3'-5' exonuclease (proofreading) activity. May be involved in translesional synthesis, in conjunction with the beta clamp from PolIII. The protein is DNA polymerase IV of Streptococcus pyogenes serotype M12 (strain MGAS2096).